We begin with the raw amino-acid sequence, 303 residues long: Cell division protein ZipA (303 aa).

The Periplasmic portion of the chain corresponds to 1–6; the sequence is MMQDLR. A helical transmembrane segment spans residues 7 to 27; the sequence is LILIIVGAIAIIALLLHGLWT. Over 28 to 303 the chain is Cytoplasmic; it reads SRKERSSLFR…RIRSTLGVQV (276 aa). Disordered stretches follow at residues 39–61, 66–85, and 124–159; these read RPVK…DEAF, KPYA…EPAI, and EQEP…GEKE. Composition is skewed to basic and acidic residues over residues 75–85 and 139–159; these read SHQEYKAEPAI and ESER…GEKE.

Belongs to the ZipA family. As to quaternary structure, interacts with FtsZ via their C-terminal domains.

The protein localises to the cell inner membrane. In terms of biological role, essential cell division protein that stabilizes the FtsZ protofilaments by cross-linking them and that serves as a cytoplasmic membrane anchor for the Z ring. Also required for the recruitment to the septal ring of downstream cell division proteins. This chain is Cell division protein ZipA, found in Photorhabdus laumondii subsp. laumondii (strain DSM 15139 / CIP 105565 / TT01) (Photorhabdus luminescens subsp. laumondii).